We begin with the raw amino-acid sequence, 439 residues long: GTPase Obg (439 aa).

An Obg domain is found at 5-164; the sequence is TDFFDQATIV…LTLELELKML (160 aa). Residues 165-335 enclose the OBG-type G domain; it reads ADVGLVGFPN…LLQRVAELLR (171 aa). GTP-binding positions include 171–178, 196–200, 217–220, 287–290, and 316–318; these read GFPNAGKS, FTTLT, DIPG, NKAD, and SAA. Mg(2+)-binding residues include Ser-178 and Thr-198. Positions 337-359 are disordered; that stretch reads DPPPQRDPVDPDEPPLEWPLPPV. One can recognise an OCT domain in the interval 356 to 433; the sequence is LPPVDENAFT…IGRAELVWDD (78 aa).

This sequence belongs to the TRAFAC class OBG-HflX-like GTPase superfamily. OBG GTPase family. As to quaternary structure, monomer. The cofactor is Mg(2+).

The protein localises to the cytoplasm. Functionally, an essential GTPase which binds GTP, GDP and possibly (p)ppGpp with moderate affinity, with high nucleotide exchange rates and a fairly low GTP hydrolysis rate. Plays a role in control of the cell cycle, stress response, ribosome biogenesis and in those bacteria that undergo differentiation, in morphogenesis control. This is GTPase Obg from Chloroflexus aggregans (strain MD-66 / DSM 9485).